Reading from the N-terminus, the 622-residue chain is MKTLLIHSDYLEFEAKEKTKIAEDTDVLNGKMDECLTVFIAVEKDDESDPDAVVKNAVDEIVKTADNLKVKNVVVYPYAHLSSDLGSPATAKEILAEIEKELSGDYEVLRAPFGWYKAFKISCKGHPLSELSRKITTERKEEVKKEKVVSKFYIINGENLELTEVNDEVISKMEDKGLLALLKHELDIKEEGKDNGEPPHVKYIKEKEICDYEPSSDAGHFRWYPKGKLIRDLLSDYVYNLVVENGGMPVETPVMYDLQNNAIREHADKFGERQYRFKQGNKDLMLRFAACFGQFMMKKDMYLLPKHMPLKLYELSTYSFRYEQRGELVGLKRLRAFTMPDMHTVCIDMKQAMEAFEDQLWMGLKTGDDFKTPYAIIFRFTEDFFEENKEWFFGMAKEYKQKYGKDAILEILPGRKHYWVGKVDMAVVDSFGRPIENPTVQIDVESAERFGIVVHDGDKKVQPIILHCSPTGSVERVLCGLLENAYLNTLENKPPALPTWLTPIQARVIPVGDKHAEFALEVATKLRASGIRADFDDREDSMGKKVRNAGTDWVNYVVVIGDSEMESSKLTVTVREESELKKAKKESLTVEELIEKITSDVKDAPKRPLPLPMKCSVQPIFR.

Positions 1–141 (MKTLLIHSDY…SRKITTERKE (141 aa)) are editing domain. The catalytic stretch occupies residues 199–498 (PHVKYIKEKE…TLENKPPALP (300 aa)). Residues cysteine 291, histidine 343, and histidine 467 each coordinate Zn(2+).

Belongs to the class-II aminoacyl-tRNA synthetase family. In terms of assembly, homodimer. It depends on Zn(2+) as a cofactor.

The protein localises to the cytoplasm. The catalysed reaction is tRNA(Thr) + L-threonine + ATP = L-threonyl-tRNA(Thr) + AMP + diphosphate + H(+). Catalyzes the attachment of threonine to tRNA(Thr) in a two-step reaction: L-threonine is first activated by ATP to form Thr-AMP and then transferred to the acceptor end of tRNA(Thr). Also edits incorrectly charged L-seryl-tRNA(Thr). This is Threonine--tRNA ligase from Methanococcus maripaludis (strain C5 / ATCC BAA-1333).